The chain runs to 310 residues: GPN-loop GTPase 2 (310 aa).

Ala-2 carries the post-translational modification N-acetylalanine. 19–24 is a GTP binding site; that stretch reads GSGKTT. Positions 76–78 match the Gly-Pro-Asn (GPN)-loop; involved in dimer interface motif; it reads GPN. 178-181 serves as a coordination point for GTP; it reads SKMD.

It belongs to the GPN-loop GTPase family. In terms of assembly, heterodimers with GPN1 or GPN3. Binds to RNA polymerase II (RNAPII).

In terms of biological role, small GTPase required for proper localization of RNA polymerase II and III (RNAPII and RNAPIII). May act at an RNAP assembly step prior to nuclear import. In Sus scrofa (Pig), this protein is GPN-loop GTPase 2.